The following is a 428-amino-acid chain: 47 kDa outer membrane protein (428 aa).

Residues 1 to 25 (MAKTSKFTQTLLASALAVVAGSASA) form the signal peptide.

This sequence belongs to the OmpP1/FadL family.

It localises to the cell outer membrane. The chain is 47 kDa outer membrane protein from Pasteurella multocida (strain Pm70).